We begin with the raw amino-acid sequence, 284 residues long: 2,3,4,5-tetrahydropyridine-2,6-dicarboxylate N-succinyltransferase (284 aa).

Substrate-binding residues include R111 and D148.

It belongs to the transferase hexapeptide repeat family. As to quaternary structure, homotrimer.

The protein localises to the cytoplasm. The catalysed reaction is (S)-2,3,4,5-tetrahydrodipicolinate + succinyl-CoA + H2O = (S)-2-succinylamino-6-oxoheptanedioate + CoA. It participates in amino-acid biosynthesis; L-lysine biosynthesis via DAP pathway; LL-2,6-diaminopimelate from (S)-tetrahydrodipicolinate (succinylase route): step 1/3. This Ehrlichia ruminantium (strain Gardel) protein is 2,3,4,5-tetrahydropyridine-2,6-dicarboxylate N-succinyltransferase.